The sequence spans 47 residues: High light-inducible protein HliC (47 aa).

Residues 1-14 lie on the Cytoplasmic side of the membrane; the sequence is MNNENSKFGFTAFA. The Chlorophyll-binding motif motif lies at 15-20; it reads ENWNGR. The hydrophobic stretch at 15–36 threads the membrane; sequence ENWNGRLAMIGFSSALILELVS. The Lumenal, thylakoid portion of the chain corresponds to 37-47; the sequence is GQGVLHFFGIL.

It belongs to the Hlip family. Forms heterodimers with both HliA and HliB; these are associated with photosystem II (PSII) assembly intermediates containing CP47 (psbB). In the absence of CP47 (psbB) and HliD, forms a homooligomer in vivo that binds 2 chlorophyll a and 1 beta-carotenoid per monomer. Cofractionates in an approximately 50 kDa fraction the thylakoid membrane with HliD. Associated in vivo with monomeric PSII. Purified in several chlorophyll- and carotenoid-containing complexes, including photosystem II (PSII) assembly intermediate complex RCII* (iD1, D1, D2, PsbE, PsbF, PsbI, Ycf39, Ycf48, HliC and HliD) and the Ycf39-Hlip complex (Ycf39, HliC, HliD and pigments).

It is found in the cellular thylakoid membrane. Functionally, forms a number of heteromers involved in photosystem II (PSII) assembly and/or repair under high light stress. Required for binding of chlorophyll and carotenoids by the Ycf39-Hlip complex. The Ycf39-Hlip complex binds D1 at an early stage of PSII assembly along with Ycf48, ribosomes and ChlG, the last enzyme in chlorophyll biosynthesis; it may be involved in chlorophyll reuse and delivery to D1 in the initial stages of PSII assembly. HliA-HliC and HliB-HliC heterodimers bind chlorophyll and carotenoids in a 1:0.6 ratio. Complexes bind mostly beta-carotenoid, but minor amounts of echinenone and beta-crytoxanthin are also detected. The complexes efficiently quench chlorophyll fluorescence, contributing to photoprotection. Deletion of 4 to 5 members of the Hlip family suggests the proteins are involved in regulation of chlorophyll biosynthesis, in stabilization of chlorophyll-binding proteins and/or in reuse of chlorophylls, and may regulate tetrapyrrole biosynthesis. Might bind chlorophyll and/or carotenoids in association with HliD (called the ScpBE pair). In terms of biological role, the Hlips might regulate tetrapyrrole biosynthesis, maybe at the level of aminolevulinic acid synthesis and probably stabilize PSII assembly intermediates. The chain is High light-inducible protein HliC (hliC) from Synechocystis sp. (strain ATCC 27184 / PCC 6803 / Kazusa).